Consider the following 132-residue polypeptide: Agouti-signaling protein (132 aa).

The signal sequence occupies residues 1-22 (MDVTRLLLATLLVFLCFFTAYS). Residue Asn39 is glycosylated (N-linked (GlcNAc...) asparagine). Positions 57 to 88 (KKSKQTSRKEAEKKRSSKKEASMKKVARPRTP) are disordered. Residues 63–79 (SRKEAEKKRSSKKEASM) show a composition bias toward basic and acidic residues. Cystine bridges form between Cys93–Cys108, Cys100–Cys114, Cys107–Cys125, Cys111–Cys132, and Cys116–Cys123. The Agouti domain maps to 93-132 (CVATRDSCKPPAPACCDPCASCQCRFFRSACSCRVLSLNC).

It is found in the secreted. Functionally, involved in the regulation of melanogenesis. The binding of ASP to MC1R precludes alpha-MSH initiated signaling and thus blocks production of cAMP, leading to a down-regulation of eumelanogenesis (brown/black pigment) and thus increasing synthesis of pheomelanin (yellow/red pigment). This is Agouti-signaling protein (ASIP) from Macaca assamensis (Assam macaque).